Here is a 795-residue protein sequence, read N- to C-terminus: Multiple C2 domain and transmembrane region protein 12 (795 aa).

C2 domains lie at 24-142 (RNPR…PQWY), 180-298 (VCAS…SAPA), and 341-463 (YSSD…TCSY). Ca(2+) contacts are provided by asparagine 57, aspartate 109, and asparagine 113. The next 4 membrane-spanning stretches (helical) occupy residues 590 to 610 (CTPKFIALGVSFVFLFWEYYI), 612 to 632 (WLVTSWLVAYCIVLCIVVILL), 730 to 750 (FVLIILLALCYCSMLVVCLGW), and 752 to 772 (LHVRKCLIFVFICYWVQLPWF).

It belongs to the MCTP family. Requires Ca(2+) as cofactor. In terms of tissue distribution, expressed in root vascular tissues and meristems. Observed in flowers.

The protein localises to the endoplasmic reticulum membrane. In terms of biological role, may function as a signaling molecule by regulating the trafficking of other regulators. In Arabidopsis thaliana (Mouse-ear cress), this protein is Multiple C2 domain and transmembrane region protein 12.